A 505-amino-acid polypeptide reads, in one-letter code: Probable malate:quinone oxidoreductase (505 aa).

The protein belongs to the MQO family. FAD serves as cofactor.

It catalyses the reaction (S)-malate + a quinone = a quinol + oxaloacetate. It functions in the pathway carbohydrate metabolism; tricarboxylic acid cycle; oxaloacetate from (S)-malate (quinone route): step 1/1. The sequence is that of Probable malate:quinone oxidoreductase from Pseudomonas fluorescens.